A 203-amino-acid polypeptide reads, in one-letter code: Ribosomal RNA small subunit methyltransferase G (203 aa).

S-adenosyl-L-methionine contacts are provided by residues G73, L78, 124–125 (VE), and R138.

Belongs to the methyltransferase superfamily. RNA methyltransferase RsmG family.

The protein localises to the cytoplasm. The enzyme catalyses guanosine(527) in 16S rRNA + S-adenosyl-L-methionine = N(7)-methylguanosine(527) in 16S rRNA + S-adenosyl-L-homocysteine. In terms of biological role, specifically methylates the N7 position of guanine in position 527 of 16S rRNA. The protein is Ribosomal RNA small subunit methyltransferase G of Haemophilus ducreyi (strain 35000HP / ATCC 700724).